Consider the following 57-residue polypeptide: Large ribosomal subunit protein eL37 (57 aa).

Cys-20, Cys-23, Cys-35, and Cys-38 together coordinate Zn(2+). A C4-type zinc finger spans residues 20-38 (CRRCGEKSYHKQKKVCASC).

It belongs to the eukaryotic ribosomal protein eL37 family. The cofactor is Zn(2+).

Its function is as follows. Binds to the 23S rRNA. This chain is Large ribosomal subunit protein eL37, found in Natronomonas pharaonis (strain ATCC 35678 / DSM 2160 / CIP 103997 / JCM 8858 / NBRC 14720 / NCIMB 2260 / Gabara) (Halobacterium pharaonis).